We begin with the raw amino-acid sequence, 121 residues long: uncharacterized protein (121 aa).

Residues 100–121 (KSFSNTKDGKKNDDDNNSSSKS) form a disordered region.

This is an uncharacterized protein from Mycoplasma pneumoniae (strain ATCC 29342 / M129 / Subtype 1) (Mycoplasmoides pneumoniae).